Here is a 506-residue protein sequence, read N- to C-terminus: Chaperone SurA (506 aa).

The first 29 residues, 1 to 29 (MMRRLHSSRRFSGSLLALALGLALPLAHA), serve as a signal peptide directing secretion. PpiC domains are found at residues 219 to 320 (PVML…KVLQ) and 351 to 450 (VTQT…QVLE).

It localises to the periplasm. It catalyses the reaction [protein]-peptidylproline (omega=180) = [protein]-peptidylproline (omega=0). Functionally, chaperone involved in the correct folding and assembly of outer membrane proteins. Recognizes specific patterns of aromatic residues and the orientation of their side chains, which are found more frequently in integral outer membrane proteins. May act in both early periplasmic and late outer membrane-associated steps of protein maturation. This Bordetella avium (strain 197N) protein is Chaperone SurA.